A 947-amino-acid polypeptide reads, in one-letter code: Pyruvate, phosphate dikinase 1, chloroplastic (947 aa).

Residues 1-62 constitute a chloroplast transit peptide; the sequence is MAASVSRAIC…GRGQHCSPLR (62 aa). Residues 21-54 form a disordered region; that stretch reads DREATSFARRSVAAPRPPHAKAAGVIRSDSGAGR. Alanine 63 carries the N-acetylalanine; partial modification. Threonine 309 carries the phosphothreonine modification. Serine 506 carries the phosphoserine modification. Threonine 527 carries the phosphothreonine; by PDRP1 modification. The residue at position 528 (serine 528) is a Phosphoserine; by PDRP1. Histidine 529 acts as the Tele-phosphohistidine intermediate in catalysis. Residues arginine 635, arginine 692, glutamate 821, glycine 842, threonine 843, asparagine 844, and aspartate 845 each coordinate substrate. Glutamate 821 contacts Mg(2+). Aspartate 845 serves as a coordination point for Mg(2+). The Proton donor role is filled by cysteine 907.

It belongs to the PEP-utilizing enzyme family. Homotetramer. Requires Mg(2+) as cofactor. In terms of processing, phosphorylation of Thr-527 in the dark inactivates the enzyme, dephosphorylation upon light stimulation reactivates the enzyme. More highly phosphorylated when grown under high rather than low light regimes (70 vs 900 umol photons/m-2/s). the degree of phosphorylation is strictly regulated by light intensity and the light/dark transition has no influence. Phosphorylated in both mesophyll and bundle sheath cells. The phosphorylation at Ser-528 may be important for the phosphorylation at Thr-527 and may also be regulated by light intensity. In terms of tissue distribution, isoform C4PPDKZM1 mainly localized in mesophyll cells and only a low level is found in bundle sheath cells. Isoform CYPPDKZM1 expressed in roots, stems and etiolated leaves.

It localises to the plastid. It is found in the chloroplast. Its subcellular location is the cytoplasm. The catalysed reaction is pyruvate + phosphate + ATP = phosphoenolpyruvate + AMP + diphosphate + H(+). It participates in photosynthesis; C4 acid pathway. Its activity is regulated as follows. Activated by light-induced dephosphorylation. Inhibited by dark-induced phosphorylation. Both reactions are catalyzed by PDRP1. Inactivated by cold due to the dissociation of the homotetramer. Independent of circadian regulation. In terms of biological role, formation of phosphoenolpyruvate, which is the primary acceptor of CO(2) in C4 and some Crassulacean acid metabolism plants. In Zea mays (Maize), this protein is Pyruvate, phosphate dikinase 1, chloroplastic.